We begin with the raw amino-acid sequence, 490 residues long: ATP synthase subunit beta, chloroplastic (490 aa).

An ATP-binding site is contributed by 170-177; sequence GGAGVGKT.

The protein belongs to the ATPase alpha/beta chains family. In terms of assembly, F-type ATPases have 2 components, CF(1) - the catalytic core - and CF(0) - the membrane proton channel. CF(1) has five subunits: alpha(3), beta(3), gamma(1), delta(1), epsilon(1). CF(0) has four main subunits: a(1), b(1), b'(1) and c(9-12).

Its subcellular location is the plastid. The protein localises to the chloroplast thylakoid membrane. The enzyme catalyses ATP + H2O + 4 H(+)(in) = ADP + phosphate + 5 H(+)(out). Its function is as follows. Produces ATP from ADP in the presence of a proton gradient across the membrane. The catalytic sites are hosted primarily by the beta subunits. This Ipomoea quamoclit (Cypress vine) protein is ATP synthase subunit beta, chloroplastic.